A 375-amino-acid chain; its full sequence is Probable butyrate kinase 2 (375 aa).

Belongs to the acetokinase family.

It localises to the cytoplasm. It carries out the reaction butanoate + ATP = butanoyl phosphate + ADP. This chain is Probable butyrate kinase 2, found in Thermotoga maritima (strain ATCC 43589 / DSM 3109 / JCM 10099 / NBRC 100826 / MSB8).